Reading from the N-terminus, the 413-residue chain is Putative ankyrin repeat protein L92 (413 aa).

8 ANK repeats span residues 1-28 (MCACKFATYNSNIGAVKLLLDKGADINC), 32-67 (DGMSALSAVCKNLDLEFRSDFDTIKLLIERGADVNL), 68-104 (TVDGHYTPLMWLIKNLSENDDRFSESKISSIKNLFES), 105-134 (DDDDYFFENKRKNKYNALKLLLDNGANIEA), 137-170 (DGETPLLLACKLSSEITSTKHIKILLKKGAKTNI), 174-208 (DRKTPLMLLCKNCQQYLENEAVDVLIKYGKANINY), 212-242 (IGETALIYLCRISFMSESVQFLLEKGANPNI), and 246-275 (SGNTALHYAVKRHEFEMVEILLRYNASPEI).

This is Putative ankyrin repeat protein L92 from Acanthamoeba polyphaga mimivirus (APMV).